An 80-amino-acid polypeptide reads, in one-letter code: Diphthamide biosynthesis protein 3 (80 aa).

In terms of domain architecture, DPH-type MB spans 4 to 60 (FHDEVEIEDFEFDEEKDVYHYPCPCGDRFEIPREMLEMGEDVAQCPSCSLLIRVIYD). 4 residues coordinate Fe cation: Cys-26, Cys-28, Cys-48, and Cys-51.

It belongs to the DPH3 family. Component of the 2-(3-amino-3-carboxypropyl)histidine synthase complex composed of dph-1, dph-2, dph-3 and a NADH-dependent reductase. The cofactor is Fe(2+).

The enzyme catalyses [3Fe-4S](1+)-[protein] + Fe(2+)-[Dph3] = [3Fe-4S](0)-[protein] + Fe(3+)-[Dph3]. It catalyses the reaction 2 [3Fe-4S](0)-[protein] + 2 Fe(2+)-[Dph3] + NADH = 2 [4Fe-4S](1+)-[protein] + 2 [Dph3] + NAD(+) + H(+). Its pathway is protein modification; peptidyl-diphthamide biosynthesis. Required for the first step of diphthamide biosynthesis, a post-translational modification of histidine which occurs in elongation factor 2. Dph-1 and dph-2 transfer a 3-amino-3-carboxypropyl (ACP) group from S-adenosyl-L-methionine (SAM) to a histidine residue, the reaction is assisted by a reduction system comprising dph-3 and a NADH-dependent reductase. Acts as an electron donor to reduce the Fe-S cluster in dph1-dph2 keeping the [4Fe-4S] clusters in the active and reduced state. Restores iron to dph-1-dph-2 iron-sulfur clusters which have degraded from [4Fe-4S] to [3Fe-4S] by donating an iron atom to reform [4Fe-4S] clusters, in a manner dependent on the presence of elongation factor 2 and SAM. Associates with the elongator complex and is required for tRNA Wobble base modifications mediated by the elongator complex. The elongator complex is required for multiple tRNA modifications, including mcm5U (5-methoxycarbonylmethyl uridine), mcm5s 2U (5-methoxycarbonylmethyl-2-thiouridine), and ncm5U (5-carbamoylmethyl uridine). In Caenorhabditis elegans, this protein is Diphthamide biosynthesis protein 3.